The sequence spans 485 residues: Adenosylhomocysteinase (485 aa).

Substrate contacts are provided by Thr64, Asp139, and Glu205. 206-208 (TTT) contributes to the NAD(+) binding site. Substrate contacts are provided by Lys235 and Asp239. Residues Asn240, 269-274 (GYGDVG), Glu292, Asn327, and 348-350 (IGH) each bind NAD(+).

Belongs to the adenosylhomocysteinase family. In terms of assembly, homotetramer. It depends on NAD(+) as a cofactor.

It catalyses the reaction S-adenosyl-L-homocysteine + H2O = L-homocysteine + adenosine. Its pathway is amino-acid biosynthesis; L-homocysteine biosynthesis; L-homocysteine from S-adenosyl-L-homocysteine: step 1/1. Adenosylhomocysteine is a competitive inhibitor of S-adenosyl-L-methionine-dependent methyl transferase reactions; therefore adenosylhomocysteinase may play a key role in the control of methylations via regulation of the intracellular concentration of adenosylhomocysteine. The protein is Adenosylhomocysteinase (SAHH) of Mesembryanthemum crystallinum (Common ice plant).